The chain runs to 269 residues: Phosphate import ATP-binding protein PstB (269 aa).

In terms of domain architecture, ABC transporter spans 21 to 264 (SEVRNLSFYY…PKNKQTEDYI (244 aa)). 53-60 (GPSGCGKS) contributes to the ATP binding site.

This sequence belongs to the ABC transporter superfamily. Phosphate importer (TC 3.A.1.7) family. The complex is composed of two ATP-binding proteins (PstB), two transmembrane proteins (PstC and PstA) and a solute-binding protein (PstS).

It localises to the cell inner membrane. The enzyme catalyses phosphate(out) + ATP + H2O = ADP + 2 phosphate(in) + H(+). Its function is as follows. Part of the ABC transporter complex PstSACB involved in phosphate import. Responsible for energy coupling to the transport system. In Nitrosospira multiformis (strain ATCC 25196 / NCIMB 11849 / C 71), this protein is Phosphate import ATP-binding protein PstB.